The following is a 435-amino-acid chain: Indole diterpene prenyltransferase atmD (435 aa).

Residues 81-82 (AY) and Glu-90 each bind L-tryptophan. Residues Arg-103, Lys-190, Arg-261, Lys-263, Tyr-265, Tyr-346, and Tyr-413 each coordinate substrate.

This sequence belongs to the tryptophan dimethylallyltransferase family.

In terms of biological role, indole diterpene prenyltransferase; part of the ATM2 gene cluster that mediates the biosynthesis of aflatrem, a tremorgenic mycotoxin with acute neurotoxic effects. Synthesis of geranylgeranyl diphosphate (GGPP) by AtmG (a GGPP synthase) precedes condensation of GGPP with indole 3-glycerol phosphate, followed by epoxidation and cyclization by AtmM (a FAD-dependent monooxygenase) and AtmC (a prenyltransferase) to produce paspaline. AtmB is also essential for paspaline production, but its exact role has not been identified yet. AtmP, a cytochrome P450 monooxygenase, subsequently converts paspaline to 13-desoxypaxilline via PC-M6 by removal of the C-30 methyl group and oxidation at C-10. AtmQ, a cytochrome P450 monooxygenase, then catalyzes the oxidation of 13-desoxypaxilline, first at C-7 to produce paspalicine and then at C-13 to form paspalinine. Finally, AtmD prenylates paspalinine to form aflatrem. The polypeptide is Indole diterpene prenyltransferase atmD (Aspergillus flavus).